The sequence spans 200 residues: Charged multivesicular body protein 6 (200 aa).

Glycine 2 is lipidated: N-myristoyl glycine. Residues 10–94 (RSRVTEQDKA…ERMVQDIEFT (85 aa)) are a coiled coil. The Type-2 MIT-interacting motif signature appears at 168-179 (LELPDVPSEPLP). The tract at residues 169 to 200 (ELPDVPSEPLPEEPPEATPVKNRPKPELVAAS) is disordered.

Belongs to the SNF7 family. As to quaternary structure, probable core component of the endosomal sorting required for transport complex III (ESCRT-III). ESCRT-III components are thought to multimerize to form a flat lattice on the perimeter membrane of the endosome.

It localises to the endomembrane system. Its subcellular location is the late endosome membrane. Probable core component of the endosomal sorting required for transport complex III (ESCRT-III) which is involved in multivesicular bodies (MVBs) formation and sorting of endosomal cargo proteins into MVBs. MVBs contain intraluminal vesicles (ILVs) that are generated by invagination and scission from the limiting membrane of the endosome and mostly are delivered to lysosomes enabling degradation of membrane proteins, such as stimulated growth factor receptors, lysosomal enzymes and lipids. In the ESCRT-III complex, it probably serves as an acceptor for the ESCRT-II complex on endosomal membranes. This chain is Charged multivesicular body protein 6 (CHMP6), found in Gallus gallus (Chicken).